Reading from the N-terminus, the 1033-residue chain is DNA polymerase I A, chloroplastic (1033 aa).

A compositionally biased stretch (pro residues) spans 1–11 (MAVAPPLPPAP). 2 disordered regions span residues 1 to 32 (MAVA…LSSP) and 104 to 142 (TNGT…PSNS). The transit peptide at 1–55 (MAVAPPLPPAPARQLRRWKGSSPRPPPWLSSPFRRTRYLSRPAFAAGGRQDYSPS) directs the protein to the chloroplast. The span at 115–124 (LRHDPSEDIR) shows a compositional bias: basic and acidic residues. Over residues 125–142 (SSNYPSLYNQRERGPSNS) the composition is skewed to polar residues. Residues 321-482 (FGNGKTCIWV…LYESLKNKLE (162 aa)) form the 3'-5' exonuclease domain. Residues 696–1030 (CHAIAALCEV…VDAKYAKSWY (335 aa)) are polymerase.

The protein belongs to the DNA polymerase type-A family. In terms of tissue distribution, expressed in shoot apical meristem, root apical meristem, leaf primordia and the marginal meristem.

It is found in the plastid. Its subcellular location is the chloroplast. It catalyses the reaction DNA(n) + a 2'-deoxyribonucleoside 5'-triphosphate = DNA(n+1) + diphosphate. Inhibited by dideoxythymidine-triphosphate (ddTTP), but not by aphidicolin and N-ethylmaleimide. Its function is as follows. In addition to polymerase activity, this DNA polymerase exhibits 5'-3' exonuclease activity. May be required for DNA replication and accumulation in plastids. In Oryza sativa subsp. japonica (Rice), this protein is DNA polymerase I A, chloroplastic.